A 455-amino-acid polypeptide reads, in one-letter code: Argininosuccinate lyase (455 aa).

This sequence belongs to the lyase 1 family. Argininosuccinate lyase subfamily.

It is found in the cytoplasm. It carries out the reaction 2-(N(omega)-L-arginino)succinate = fumarate + L-arginine. It participates in amino-acid biosynthesis; L-arginine biosynthesis; L-arginine from L-ornithine and carbamoyl phosphate: step 3/3. The protein is Argininosuccinate lyase of Shewanella sp. (strain MR-7).